Consider the following 418-residue polypeptide: Histidinol dehydrogenase (418 aa).

The NAD(+) site is built by Tyr119, Gln180, and Asn203. Residues Thr226, Gln248, and His251 each coordinate substrate. Residues Gln248 and His251 each contribute to the Zn(2+) site. Residues Glu316 and His317 each act as proton acceptor in the active site. Substrate is bound by residues His317, Asp350, Glu404, and His409. Position 350 (Asp350) interacts with Zn(2+). Residue His409 coordinates Zn(2+).

The protein belongs to the histidinol dehydrogenase family. Requires Zn(2+) as cofactor.

It catalyses the reaction L-histidinol + 2 NAD(+) + H2O = L-histidine + 2 NADH + 3 H(+). It participates in amino-acid biosynthesis; L-histidine biosynthesis; L-histidine from 5-phospho-alpha-D-ribose 1-diphosphate: step 9/9. Functionally, catalyzes the sequential NAD-dependent oxidations of L-histidinol to L-histidinaldehyde and then to L-histidine. The polypeptide is Histidinol dehydrogenase (Staphylococcus aureus (strain MRSA252)).